A 129-amino-acid polypeptide reads, in one-letter code: NADPH-dependent 7-cyano-7-deazaguanine reductase (129 aa).

The active-site Thioimide intermediate is the Cys34. Catalysis depends on Asp41, which acts as the Proton donor. Residues 56-58 (VEL) and 75-76 (HE) contribute to the substrate site.

Belongs to the GTP cyclohydrolase I family. QueF type 1 subfamily.

The protein localises to the cytoplasm. The catalysed reaction is 7-aminomethyl-7-carbaguanine + 2 NADP(+) = 7-cyano-7-deazaguanine + 2 NADPH + 3 H(+). It functions in the pathway tRNA modification; tRNA-queuosine biosynthesis. Catalyzes the NADPH-dependent reduction of 7-cyano-7-deazaguanine (preQ0) to 7-aminomethyl-7-deazaguanine (preQ1). The polypeptide is NADPH-dependent 7-cyano-7-deazaguanine reductase (Alkalilimnicola ehrlichii (strain ATCC BAA-1101 / DSM 17681 / MLHE-1)).